We begin with the raw amino-acid sequence, 156 residues long: Peroxisomal membrane associated protein 20 (156 aa).

Positions 2-156 constitute a Thioredoxin domain; sequence VAVGSTLPKV…SSADKVLSSL (155 aa). Cysteine 43 serves as the catalytic Cysteine sulfenic acid (-SOH) intermediate.

It belongs to the peroxiredoxin family. Prx5 subfamily. In terms of assembly, homodimer; disulfide-linked, upon oxidation.

It localises to the cytoplasm. Its subcellular location is the nucleus. In terms of biological role, may act as a chaperone rather than a peroxidase. Has no thioredoxin-dependent peroxidase activity. Shows weak chaperone activity. The sequence is that of Peroxisomal membrane associated protein 20 from Schizosaccharomyces pombe (strain 972 / ATCC 24843) (Fission yeast).